Here is a 408-residue protein sequence, read N- to C-terminus: Na(+)-translocating NADH-quinone reductase subunit F (408 aa).

A helical membrane pass occupies residues 4 to 24 (IYLGVGMFTIIVLVLVAIIMF). One can recognise a 2Fe-2S ferredoxin-type domain in the interval 33 to 127 (GDVEILINDD…DMEIELPEEV (95 aa)). [2Fe-2S] cluster-binding residues include cysteine 70, cysteine 76, cysteine 79, and cysteine 111. Residues 130–270 (IRKWDCTVKS…SGPFGEFFAK (141 aa)) form the FAD-binding FR-type domain.

The protein belongs to the NqrF family. Composed of six subunits; NqrA, NqrB, NqrC, NqrD, NqrE and NqrF. Requires [2Fe-2S] cluster as cofactor. The cofactor is FAD.

Its subcellular location is the cell inner membrane. The catalysed reaction is a ubiquinone + n Na(+)(in) + NADH + H(+) = a ubiquinol + n Na(+)(out) + NAD(+). NQR complex catalyzes the reduction of ubiquinone-1 to ubiquinol by two successive reactions, coupled with the transport of Na(+) ions from the cytoplasm to the periplasm. The first step is catalyzed by NqrF, which accepts electrons from NADH and reduces ubiquinone-1 to ubisemiquinone by a one-electron transfer pathway. This chain is Na(+)-translocating NADH-quinone reductase subunit F, found in Idiomarina loihiensis (strain ATCC BAA-735 / DSM 15497 / L2-TR).